The primary structure comprises 574 residues: Amino-acid acetyltransferase, mitochondrial (574 aa).

Residues Met-1–Asp-13 constitute a mitochondrion transit peptide. The region spanning Lys-392–Val-560 is the N-acetyltransferase domain.

The protein belongs to the acetyltransferase family. As to quaternary structure, interacts with the acetylglutamate kinase chain of AGR5,6.

It is found in the mitochondrion. The catalysed reaction is L-glutamate + acetyl-CoA = N-acetyl-L-glutamate + CoA + H(+). It functions in the pathway amino-acid biosynthesis; L-arginine biosynthesis; N(2)-acetyl-L-ornithine from L-glutamate: step 1/4. With respect to regulation, feedback inhibition by L-arginine. In terms of biological role, N-acetylglutamate synthase involved in arginine biosynthesis. This chain is Amino-acid acetyltransferase, mitochondrial (ARG2), found in Saccharomyces cerevisiae (strain RM11-1a) (Baker's yeast).